Reading from the N-terminus, the 533-residue chain is RNA end formation protein 2 (533 aa).

Disordered regions lie at residues 187–254 (SNST…SSMK), 260–279 (LFNKNEAKSTESLPTSSKKK), and 321–344 (SSSTSGSSTTTVATPASSEEPLKK). Positions 206 to 222 (KIKDSEKEKEKEKDKSK) are enriched in basic and acidic residues. A compositionally biased stretch (low complexity) spans 242 to 252 (SSPSPTASTSS). The segment covering 321–338 (SSSTSGSSTTTVATPASS) has biased composition (low complexity).

In terms of assembly, interacts with FIR1. Component of the cleavage and polyadenylation factor (CPF) complex, which is composed of PTI1, SYC1, SSU72, GLC7, MPE1, REF2, PFS2, PTA1, YSH1/BRR5, SWD2, CFT2/YDH1, YTH1, CFT1/YHH1, FIP1 and PAP1. Component of the APT complex, which is a subcomplex of CPF, and is composed of PTI1, SYC1, SSU72, GLC7, REF2, PTA1 and SWD2.

Its subcellular location is the nucleus. Its function is as follows. RNA-binding component of the cleavage and polyadenylation factor (CPF) complex, which plays a key role in polyadenylation-dependent pre-mRNA 3'-end formation and cooperates with cleavage factors including the CFIA complex and NAB4/CFIB. Negative regulator of poly(A) synthesis. Component of the APT complex, which may be involved in polyadenylation-independent transcript 3'-end formation. REF2 is required for 3'-end formation of snoRNAs. The sequence is that of RNA end formation protein 2 (REF2) from Saccharomyces cerevisiae (strain ATCC 204508 / S288c) (Baker's yeast).